The following is a 277-amino-acid chain: Indole-3-glycerol phosphate synthase (277 aa).

This sequence belongs to the TrpC family.

The catalysed reaction is 1-(2-carboxyphenylamino)-1-deoxy-D-ribulose 5-phosphate + H(+) = (1S,2R)-1-C-(indol-3-yl)glycerol 3-phosphate + CO2 + H2O. It participates in amino-acid biosynthesis; L-tryptophan biosynthesis; L-tryptophan from chorismate: step 4/5. The chain is Indole-3-glycerol phosphate synthase from Pseudomonas putida (strain ATCC 47054 / DSM 6125 / CFBP 8728 / NCIMB 11950 / KT2440).